Consider the following 118-residue polypeptide: SPbeta prophage-derived uncharacterized protein YomS (118 aa).

The polypeptide is SPbeta prophage-derived uncharacterized protein YomS (yomS) (Bacillus subtilis (strain 168)).